Consider the following 923-residue polypeptide: Calmodulin-binding transcription activator 5 (923 aa).

The CG-1 DNA-binding region spans 25-151 (IQTMLDEAYS…YRETHEVHAA (127 aa)). The transcription activation stretch occupies residues 272–372 (VYQNNNSCGA…HSHSDIPEQV (101 aa)). The stretch at 611–640 (QGWTALHWAAYYGREKMVAALLSAGARPNL) is one ANK repeat. IQ domains follow at residues 757 to 786 (NIIA…IQYR), 799 to 828 (MRKK…SVGV), and 875 to 904 (LERS…AHEE). Positions 824-846 (WSVGVLEKAILRWRLKRKGFRGL) are calmodulin-binding. Positions 887 to 914 (RSKKAQQDYRRMKLAHEEAQLEYDGMQE) form a coiled coil.

Belongs to the CAMTA family. In terms of tissue distribution, expressed in roots, stems, leaves, pollen, top of sepals and siliques.

It localises to the nucleus. Transcription activator. Binds to the DNA consensus sequence 5'-[ACG]CGCG[GTC]-3'. Regulates transcriptional activity in response to calcium signals. Binds calmodulin in a calcium-dependent manner. Involved in response to cold. Contributes together with CAMTA3 to the positive regulation of the cold-induced expression of DREB1A/CBF3, DREB1B/CBF1 and DREB1C/CBF2. The sequence is that of Calmodulin-binding transcription activator 5 from Arabidopsis thaliana (Mouse-ear cress).